A 407-amino-acid polypeptide reads, in one-letter code: O-methyltransferase verK (407 aa).

Residues E263 and 295 to 297 contribute to the S-adenosyl-L-methionine site; that span reads GDF. The Proton acceptor role is filled by H314.

Belongs to the class I-like SAM-binding methyltransferase superfamily. Cation-independent O-methyltransferase family.

It functions in the pathway mycotoxin biosynthesis. Functionally, O-methyltransferase; part of the gene cluster that mediates the biosynthesis of 11'-deoxyverticillin A, one of the dimeric epipolythiodioxopiperazines (ETPs) from the verticillin family that act as mycotoxins. 11'-deoxyverticillin A is required for normal conidiation. The nonribosomal peptide synthetase verP is speculated to be responsible for condensation of amino acids to form the carbon skeleton of verticillin, whereas the cluster-specific tailoring enzymes are involved in further modifications leading to the production of 11'-deoxyverticillin A. In Clonostachys rogersoniana, this protein is O-methyltransferase verK.